The chain runs to 381 residues: Chaperone protein DnaJ (381 aa).

Residues 5–70 (DFYEVLGVSR…QKKAAYDQYG (66 aa)) enclose the J domain. The CR-type zinc-finger motif lies at 136–214 (GVSKEIEVPT…CHGQGRKQKT (79 aa)). Residues C149, C152, C166, C169, C188, C191, C202, and C205 each contribute to the Zn(2+) site. CXXCXGXG motif repeat units lie at residues 149–156 (CDICDGSG), 166–173 (CGTCHGHG), 188–195 (CPTCNGKG), and 202–209 (CNSCHGQG).

It belongs to the DnaJ family. Homodimer. Zn(2+) serves as cofactor.

Its subcellular location is the cytoplasm. Its function is as follows. Participates actively in the response to hyperosmotic and heat shock by preventing the aggregation of stress-denatured proteins and by disaggregating proteins, also in an autonomous, DnaK-independent fashion. Unfolded proteins bind initially to DnaJ; upon interaction with the DnaJ-bound protein, DnaK hydrolyzes its bound ATP, resulting in the formation of a stable complex. GrpE releases ADP from DnaK; ATP binding to DnaK triggers the release of the substrate protein, thus completing the reaction cycle. Several rounds of ATP-dependent interactions between DnaJ, DnaK and GrpE are required for fully efficient folding. Also involved, together with DnaK and GrpE, in the DNA replication of plasmids through activation of initiation proteins. This is Chaperone protein DnaJ from Vibrio atlanticus (strain LGP32) (Vibrio splendidus (strain Mel32)).